Here is a 215-residue protein sequence, read N- to C-terminus: Protein GrpE (215 aa).

Polar residues predominate over residues 1–28 (MKHTSDTPSNSDMPSDSQATQPNASATG). The segment at 1 to 52 (MKHTSDTPSNSDMPSDSQATQPNASATGQAAHAYSSQAQRASADAQAVAGDE) is disordered. Residues 29-52 (QAAHAYSSQAQRASADAQAVAGDE) are compositionally biased toward low complexity.

This sequence belongs to the GrpE family. In terms of assembly, homodimer.

It localises to the cytoplasm. Functionally, participates actively in the response to hyperosmotic and heat shock by preventing the aggregation of stress-denatured proteins, in association with DnaK and GrpE. It is the nucleotide exchange factor for DnaK and may function as a thermosensor. Unfolded proteins bind initially to DnaJ; upon interaction with the DnaJ-bound protein, DnaK hydrolyzes its bound ATP, resulting in the formation of a stable complex. GrpE releases ADP from DnaK; ATP binding to DnaK triggers the release of the substrate protein, thus completing the reaction cycle. Several rounds of ATP-dependent interactions between DnaJ, DnaK and GrpE are required for fully efficient folding. The protein is Protein GrpE of Ralstonia pickettii (strain 12J).